The following is a 314-amino-acid chain: Probable cell division protein WhiA (314 aa).

A DNA-binding region (H-T-H motif) is located at residues 282–314 (SLKELGELCRPPVSKSGAAHRMRQLMALAESLE).

Belongs to the WhiA family.

Involved in cell division and chromosome segregation. This Symbiobacterium thermophilum (strain DSM 24528 / JCM 14929 / IAM 14863 / T) protein is Probable cell division protein WhiA.